The following is a 501-amino-acid chain: U6 snRNA (guanine-N(2))-methyltransferase THUMPD2 (501 aa).

Residues 149-264 (TEQIQELQET…DVYSVLGIPV (116 aa)) enclose the THUMP domain. The disordered stretch occupies residues 414-469 (LKGGEASSGPLNSQGGHTEEPGGEERLTPAEKAAVSEPVSSPFAASNQGRLDRMPP). Basic and acidic residues predominate over residues 430 to 442 (HTEEPGGEERLTP).

It belongs to the methyltransferase superfamily. As to quaternary structure, part of the heterodimeric THUMPD2-TRM112 methyltransferase complex; this complex forms an active tRNA methyltransferase, where TRMT112 acts as an activator of the catalytic subunit THUMPD2.

It is found in the nucleus. The catalysed reaction is guanosine in U6 snRNA + S-adenosyl-L-methionine = N(2)-methylguanosine in U6 snRNA + S-adenosyl-L-homocysteine + H(+). Functionally, catalytic subunit of the THUMPD2-TRM112 methyltransferase complex, that specifically mediates the S-adenosyl-L-methionine-dependent N(2)-methylation of guanosine nucleotides, most probably at position 72 (m2G72), in the U6snRNA of the major spliceosome. This modification in the U6 snRNA affects the constitutive splicing efficiency of introns that have suboptimal splice sites and can impact final mRNA levels. The polypeptide is U6 snRNA (guanine-N(2))-methyltransferase THUMPD2 (Bos taurus (Bovine)).